A 552-amino-acid polypeptide reads, in one-letter code: Membrane protein insertase YidC (552 aa).

A helical membrane pass occupies residues 3–23 (IKRTVLWVIFFMSAVMLFDNW). The disordered stretch occupies residues 36–59 (SATPTRTVGSAAPGTTTPGTQPAD). Residues 42-59 (TVGSAAPGTTTPGTQPAD) are compositionally biased toward low complexity. Transmembrane regions (helical) follow at residues 364–384 (WGWS…PLSA), 430–450 (FGGC…YWVL), and 504–524 (MMFM…GLVL).

Belongs to the OXA1/ALB3/YidC family. Type 1 subfamily. Interacts with the Sec translocase complex via SecD. Specifically interacts with transmembrane segments of nascent integral membrane proteins during membrane integration.

Its subcellular location is the cell inner membrane. Its function is as follows. Required for the insertion and/or proper folding and/or complex formation of integral membrane proteins into the membrane. Involved in integration of membrane proteins that insert both dependently and independently of the Sec translocase complex, as well as at least some lipoproteins. Aids folding of multispanning membrane proteins. This is Membrane protein insertase YidC from Paraburkholderia xenovorans (strain LB400).